The sequence spans 297 residues: N-acetylmuramic acid 6-phosphate etherase (297 aa).

The SIS domain maps to 56–219 (AIEAFNKGGR…STISMIGIGK (164 aa)). E84 serves as the catalytic Proton donor. E115 is a catalytic residue.

This sequence belongs to the GCKR-like family. MurNAc-6-P etherase subfamily. In terms of assembly, homodimer.

It carries out the reaction N-acetyl-D-muramate 6-phosphate + H2O = N-acetyl-D-glucosamine 6-phosphate + (R)-lactate. Its pathway is amino-sugar metabolism; N-acetylmuramate degradation. Its function is as follows. Specifically catalyzes the cleavage of the D-lactyl ether substituent of MurNAc 6-phosphate, producing GlcNAc 6-phosphate and D-lactate. This is N-acetylmuramic acid 6-phosphate etherase from Lactococcus lactis subsp. lactis (strain IL1403) (Streptococcus lactis).